The primary structure comprises 282 residues: Putative hydrolase Bmul_3283/BMULJ_05242 (282 aa).

Residues Glu124, Glu126, and Asp155 each contribute to the Mg(2+) site.

The protein belongs to the FAH family. Requires Mg(2+) as cofactor.

This Burkholderia multivorans (strain ATCC 17616 / 249) protein is Putative hydrolase Bmul_3283/BMULJ_05242.